The chain runs to 1292 residues: Zinc finger protein 423 (1292 aa).

Over residues 1–11 the composition is skewed to basic residues; sequence MSRRKQAKPRS. Disordered regions lie at residues 1 to 21, 33 to 70, and 95 to 125; these read MSRRKQAKPRSVKVEEGEASD, AGGLEGEPECDRKTSRALEDRNSVTSQEERNEDDEDVE, and AHRCPGDGDDDPQLSWVASSPSSKDVASPTQ. Over residues 41-54 the composition is skewed to basic and acidic residues; it reads ECDRKTSRALEDRN. A phosphoserine mark is found at Ser-55 and Ser-58. The C2H2-type 1; degenerate zinc-finger motif lies at 75–101; the sequence is YTCDHCQQDFESLADLTDHRAHRCPGD. The span at 110-125 shows a compositional bias: polar residues; sequence WVASSPSSKDVASPTQ. 7 C2H2-type zinc fingers span residues 146-168, 174-196, 202-224, 230-252, 271-294, 303-326, and 331-353; these read YPCQFCDKSFIRLSYLKRHEQIH, FKCTFCSRLFKHKRSRDRHIKLH, YHCHECEAAFSRSDHLKIHLKTH, FKCSVCKRGFSSTSSLQSHMQAH, FMCDYCEDTFSQTEELEKHVLTLH, LQCIHCPEVFVDESTLLAHIHQAH, and HKCPMCPEQFSSVEGVYCHLDSH. Residues 354–407 are disordered; it reads RQPDSSNHSVSPDPVLGSVASMSSATPDSSASVERGSTPDSTLKPLRGQKKMRD. Residues 371–385 show a composition bias toward low complexity; the sequence is SVASMSSATPDSSAS. Residues 417–441 form a C2H2-type 9; degenerate zinc finger; it reads YSCPYCSKRDFTSLAVLEIHLKTIH. 3 C2H2-type zinc fingers span residues 449-472, 488-511, and 525-548; these read HTCQICLDSMPTLYNLNEHVRKLH, FHCNYCPEMFADINSLQEHIRVSH, and FFCNQCSMGFLTESSLTEHIQQAH. The C2H2-type 13; atypical zinc finger occupies 571–596; that stretch reads YSCPYCTNSPIFGSILKLTKHIKENH. The interval 598-635 is disordered; the sequence is NIPLAHSKKSKAEQSPVSSDVEVSSPKRQRLSGSANSI. Ser-612 is modified (phosphoserine). The span at 612 to 623 shows a compositional bias: low complexity; that stretch reads SPVSSDVEVSSP. 7 C2H2-type zinc fingers span residues 640-662, 670-692, 700-723, 728-751, 758-781, 789-811, and 815-838; these read YPCNQCDLKFSNFESFQTHLKLH, QACPQCKEDFDSQESLLQHLTVH, YVCESCDKQFSSVDDLQKHLLDMH, YHCTLCQEVFDSKVSIQVHLAVKH, YRCTACNWDFRKEADLQVHVKHSH, HKCIFCGETFSTEVELQCHITTH, and YNCRFCSKAFHAVILLEKHLREKH. The segment at 894 to 916 adopts a C2H2-type 21; degenerate zinc-finger fold; sequence YGCDICGAAYTMEVLLQNHRLRD. 3 consecutive C2H2-type zinc fingers follow at residues 938 to 960, 967 to 989, and 1028 to 1050; these read HKCNVCSRTFFSENGLREHLQTH, YMCPICGERFPSLLTLTEHKVTH, and FRCVVCMQTVTSTLELKIHGTFH. Ser-1062 carries the post-translational modification Phosphoserine. The segment at 1072–1090 adopts a C2H2-type 25; degenerate zinc-finger fold; the sequence is YKCALCLKEFRSKQDLVRL. 5 C2H2-type zinc fingers span residues 1128-1151, 1176-1198, 1206-1228, 1237-1260, and 1267-1290; these read LRCPECNVKFESAEDLESHMQVDH, YQCIKCQMTFENEREIQIHVANH, HECKLCNQMFDSPAKLLCHLIEH, FKCPVCFTVFVQANKLQQHIFAVH, and YDCSQCPQKFFFQTELQNHTMSQH. Residues 1144–1155 are compositionally biased toward basic and acidic residues; that stretch reads ESHMQVDHRDLT. Positions 1144–1171 are disordered; that stretch reads ESHMQVDHRDLTPETSGPRKGAQTSPVP.

This sequence belongs to the krueppel C2H2-type zinc-finger protein family. In terms of assembly, homodimer. Interacts with SMAD1 and SMAD4. Interacts with EBF1. Interacts with PARP1. Interacts with CEP290. In terms of tissue distribution, within the cerebellum, Zfp423 is expressed in both ventricular and external germinal zones. Transiently expressed in newly differentiating olfactory-receptor neurons.

The protein resides in the nucleus. Its function is as follows. Transcription factor that can both act as an activator or a repressor depending on the context. Plays a central role in BMP signaling and olfactory neurogenesis. Associates with SMADs in response to BMP2 leading to activate transcription of BMP target genes. Acts as a transcriptional repressor via its interaction with EBF1, a transcription factor involved in terminal olfactory receptor neurons differentiation; this interaction preventing EBF1 to bind DNA and activate olfactory-specific genes. Involved in olfactory neurogenesis by participating in a developmental switch that regulates the transition from differentiation to maturation in olfactory receptor neurons. Controls proliferation and differentiation of neural precursors in cerebellar vermis formation. The sequence is that of Zinc finger protein 423 (Znf423) from Mus musculus (Mouse).